We begin with the raw amino-acid sequence, 108 residues long: Insulin-1 (108 aa).

An N-terminal signal peptide occupies residues 1-24 (MALLVHFLPLLALLALWEPKPTQA). 3 disulfide bridges follow: C31-C94, C43-C107, and C93-C98. The propeptide at 57–85 (EVEDPQVEQLELGGSPGDLQTLALEVARQ) is c peptide.

It belongs to the insulin family. As to quaternary structure, heterodimer of a B chain and an A chain linked by two disulfide bonds.

It is found in the secreted. Insulin decreases blood glucose concentration. It increases cell permeability to monosaccharides, amino acids and fatty acids. It accelerates glycolysis, the pentose phosphate cycle, and glycogen synthesis in liver. The polypeptide is Insulin-1 (Ins1) (Mus musculus (Mouse)).